We begin with the raw amino-acid sequence, 349 residues long: Nuclear distribution protein nudE homolog 1 (349 aa).

Residues 23-189 (AMKYKTCSEE…ELAVQQKQEK (167 aa)) are a coiled coil. The interval 182–201 (AVQQKQEKPKSNMGSPETER) is disordered.

The protein belongs to the nudE family. In terms of assembly, self-associates. Interacts with pafah1b1. Phosphorylated in mitosis.

The protein localises to the cytoplasm. Its subcellular location is the cytoskeleton. It localises to the microtubule organizing center. It is found in the centrosome. The protein resides in the spindle. The protein localises to the chromosome. Its subcellular location is the centromere. It localises to the kinetochore. It is found in the cleavage furrow. The protein resides in the cytoplasmic vesicle membrane. In terms of biological role, required for centrosome duplication and formation and function of the mitotic spindle. The sequence is that of Nuclear distribution protein nudE homolog 1 (nde1) from Xenopus tropicalis (Western clawed frog).